A 315-amino-acid polypeptide reads, in one-letter code: MTHPLFLEPVFKERLWGGTKLRDAFGYAIPSQKTGECWAVSAHAHGSSSVKNGPLAGKTLDQVWKDHPEIFGFPDGKVFPLLVKLLDANMDLSVQVHPDDDYAKLHENGDLGKTECWYIIDCKDDAELILGHHASTKEEFKQRIESGDWNGLLRRIKIKPGDFFYVPSGTLHALCKGTLVLEIQQNSDTTYRVYDYDRCNDQGQKRTLHIEKAMEVITIPHIDKVHTPEVKEVGNAEIIVYVQSDYFSVYKWKISGRAAFPSYQTYLLGSVLSGSGRIINNGIQYECNAGSHFILPAHFGEFTIEGTCEFMISHP.

Residues glutamine 95, histidine 97, glutamate 115, and histidine 172 each coordinate Zn(2+). Arginine 192 is an active-site residue.

Belongs to the mannose-6-phosphate isomerase type 1 family. Zn(2+) serves as cofactor.

The catalysed reaction is D-mannose 6-phosphate = D-fructose 6-phosphate. In terms of biological role, seems to be involved in the degradation of glucomannan. This chain is Probable mannose-6-phosphate isomerase GmuF (gmuF), found in Bacillus subtilis (strain 168).